We begin with the raw amino-acid sequence, 297 residues long: tRNA dimethylallyltransferase (297 aa).

10–17 (GITASGKS) serves as a coordination point for ATP. A substrate-binding site is contributed by 12–17 (TASGKS). The interval 36-39 (DSKQ) is interaction with substrate tRNA.

The protein belongs to the IPP transferase family. As to quaternary structure, monomer. Mg(2+) is required as a cofactor.

It catalyses the reaction adenosine(37) in tRNA + dimethylallyl diphosphate = N(6)-dimethylallyladenosine(37) in tRNA + diphosphate. Functionally, catalyzes the transfer of a dimethylallyl group onto the adenine at position 37 in tRNAs that read codons beginning with uridine, leading to the formation of N6-(dimethylallyl)adenosine (i(6)A). The polypeptide is tRNA dimethylallyltransferase (Wolbachia pipientis wMel).